Consider the following 323-residue polypeptide: Prenyl transferase (323 aa).

Lys46, Arg49, and His81 together coordinate isopentenyl diphosphate. Mg(2+) is bound by residues Asp88 and Asp92. Arg97 is a binding site for an all-trans-polyprenyl diphosphate. Isopentenyl diphosphate is bound at residue Arg98. An all-trans-polyprenyl diphosphate-binding residues include Lys174, Thr175, and Gln212.

This sequence belongs to the FPP/GGPP synthase family. It depends on Mg(2+) as a cofactor.

The protein resides in the plastid. It is found in the cyanelle. Its function is as follows. Possible role in synthesis of the nonaprenyl side chain of plastoquinone or in synthesis of other prenyl chains such as undekaprenyl pyrophosphate. This is Prenyl transferase (preA) from Cyanophora paradoxa.